Here is a 338-residue protein sequence, read N- to C-terminus: Ketol-acid reductoisomerase (NADP(+)) (338 aa).

A KARI N-terminal Rossmann domain is found at 1-181 (MKVYYDKDAD…GGTKGGVIET (181 aa)). Residues 24 to 27 (YGSQ), arginine 47, and serine 52 each bind NADP(+). The active site involves histidine 107. Glycine 133 lines the NADP(+) pocket. The KARI C-terminal knotted domain maps to 182–327 (NFREETETDL…SQLRAMMPWI (146 aa)). Mg(2+)-binding residues include aspartate 190, glutamate 194, glutamate 226, and glutamate 230. A substrate-binding site is contributed by serine 251.

The protein belongs to the ketol-acid reductoisomerase family. Mg(2+) is required as a cofactor.

The enzyme catalyses (2R)-2,3-dihydroxy-3-methylbutanoate + NADP(+) = (2S)-2-acetolactate + NADPH + H(+). It catalyses the reaction (2R,3R)-2,3-dihydroxy-3-methylpentanoate + NADP(+) = (S)-2-ethyl-2-hydroxy-3-oxobutanoate + NADPH + H(+). The protein operates within amino-acid biosynthesis; L-isoleucine biosynthesis; L-isoleucine from 2-oxobutanoate: step 2/4. Its pathway is amino-acid biosynthesis; L-valine biosynthesis; L-valine from pyruvate: step 2/4. Involved in the biosynthesis of branched-chain amino acids (BCAA). Catalyzes an alkyl-migration followed by a ketol-acid reduction of (S)-2-acetolactate (S2AL) to yield (R)-2,3-dihydroxy-isovalerate. In the isomerase reaction, S2AL is rearranged via a Mg-dependent methyl migration to produce 3-hydroxy-3-methyl-2-ketobutyrate (HMKB). In the reductase reaction, this 2-ketoacid undergoes a metal-dependent reduction by NADPH to yield (R)-2,3-dihydroxy-isovalerate. This is Ketol-acid reductoisomerase (NADP(+)) from Methylobacillus flagellatus (strain ATCC 51484 / DSM 6875 / VKM B-1610 / KT).